The primary structure comprises 69 residues: Amphipathic peptide CT2 (69 aa).

Residues 1 to 23 form the signal peptide; sequence MKTQFVILIVAVVLLQLIANSEA. Residue Phe-36 is modified to Phenylalanine amide. Residues 40–69 constitute a propeptide that is removed on maturation; the sequence is GLRNLDNLDDDIFEPEMSEADLRYLQDLLR.

Belongs to the non-disulfide-bridged peptide (NDBP) superfamily. Short antimicrobial peptide (group 4) family. Expressed by the venom gland.

The protein resides in the secreted. The protein localises to the target cell membrane. In terms of biological role, amphipathic peptide that shows antibacterial activities against both Gram-positive (MIC=10 uM, 20 uM and 20 uM against S.aureus, B.subtilis and S.agalactiae, respectively) and Gram-negative bacteria (MIC=20 uM, 10 uM, and 10 uM against E.coli, S.typhi, and P.aeruginosa, respectively). Is mildly hemolytic at its MIC range, but shows a strong cytotoxic activity at higher concentrations, reaching 84% lysis at 50 uM. In Vaejovis mexicanus smithi (Mexican scorpion), this protein is Amphipathic peptide CT2.